Reading from the N-terminus, the 339-residue chain is MLPDLSAAPMQDRYGRPLRDLRLSVIEACNFRCGYCMPADRVPDDYGLDADQRLSFDQLETLVRAFVAVGVTKLRLTGGEPLLRKNLPVLIQRLAAIEGIEDLALTTNGALLARQAVALRQAGLRRITVSMDALEPALFRQMSGGRGEIDQVLAGIAAAEQAGFKRLKINCVVQRDVNEDQVLPLVEHFRGTGHVLRFIEFMDVGSCNGWRPEAVVTSAQLRDRIHARWPLAPLDANYTGEVAQRHAFADGLGEVGFVSSVSVPFCGDCQRARVSADGHLYTCLFASQGHDLKPALAEGEQGLATHLRQRWSVRADRYSEVRASTSRRRKPVEMFLIGG.

Residues 13–249 (RYGRPLRDLR…GEVAQRHAFA (237 aa)) enclose the Radical SAM core domain. Residue Arg22 coordinates GTP. Cys29 and Cys33 together coordinate [4Fe-4S] cluster. Tyr35 serves as a coordination point for S-adenosyl-L-methionine. Cys36 contacts [4Fe-4S] cluster. Residue Arg75 coordinates GTP. Residue Gly79 coordinates S-adenosyl-L-methionine. Thr106 lines the GTP pocket. Ser130 is an S-adenosyl-L-methionine binding site. Residue Lys168 coordinates GTP. Residue Met202 coordinates S-adenosyl-L-methionine. Cys266 and Cys269 together coordinate [4Fe-4S] cluster. Residue 271-273 (RAR) participates in GTP binding. Residue Cys283 coordinates [4Fe-4S] cluster.

It belongs to the radical SAM superfamily. MoaA family. As to quaternary structure, monomer and homodimer. [4Fe-4S] cluster serves as cofactor.

The enzyme catalyses GTP + AH2 + S-adenosyl-L-methionine = (8S)-3',8-cyclo-7,8-dihydroguanosine 5'-triphosphate + 5'-deoxyadenosine + L-methionine + A + H(+). It functions in the pathway cofactor biosynthesis; molybdopterin biosynthesis. In terms of biological role, catalyzes the cyclization of GTP to (8S)-3',8-cyclo-7,8-dihydroguanosine 5'-triphosphate. The protein is GTP 3',8-cyclase of Xanthomonas campestris pv. campestris (strain 8004).